Here is a 143-residue protein sequence, read N- to C-terminus: Myosin 1 light chain cam2 (143 aa).

EF-hand domains are found at residues Glu-6–Asn-41, Glu-75–Lys-110, and Leu-111–Lys-143.

This sequence belongs to the calmodulin family. Interacts with myo1 and pik1.

The protein resides in the cytoplasm. The protein localises to the prospore membrane. In terms of biological role, plays a role in meiosis and sporulation. In Schizosaccharomyces pombe (strain 972 / ATCC 24843) (Fission yeast), this protein is Myosin 1 light chain cam2.